A 635-amino-acid polypeptide reads, in one-letter code: Chaperone protein HtpG (635 aa).

Positions 1 to 343 (MSVETQKETL…SNDLSLNVSR (343 aa)) are a; substrate-binding. The tract at residues 344-560 (EILQKDPIID…EQDMGLQMRQ (217 aa)) is b. Residues 561–635 (ILEASGQKVP…LNKLLVELSV (75 aa)) form a c region.

Belongs to the heat shock protein 90 family. Homodimer.

It is found in the cytoplasm. Molecular chaperone. Has ATPase activity. In Pseudomonas syringae pv. tomato (strain ATCC BAA-871 / DC3000), this protein is Chaperone protein HtpG.